Consider the following 101-residue polypeptide: Interleukin-8 (101 aa).

Residues 1 to 22 (MTSKLAIALLAAFLLSAALCKA) form the signal peptide. Arg27 carries the citrulline modification. 2 disulfides stabilise this stretch: Cys34–Cys61 and Cys36–Cys77.

The protein belongs to the intercrine alpha (chemokine CxC) family. Homodimer. Citrullination at Arg-27 prevents proteolysis, and dampens tissue inflammation, it also enhances leukocytosis, possibly through impaired chemokine clearance from the blood circulation.

It localises to the secreted. Its function is as follows. Chemotactic factor that mediates inflammatory response by attracting neutrophils, basophils, and T-cells to clear pathogens and protect the host from infection. Also plays an important role in neutrophil activation. Released in response to an inflammatory stimulus, exerts its effect by binding to the G-protein-coupled receptors CXCR1 and CXCR2, primarily found in neutrophils, monocytes and endothelial cells. G-protein heterotrimer (alpha, beta, gamma subunits) constitutively binds to CXCR1/CXCR2 receptor and activation by IL8 leads to beta and gamma subunits release from Galpha (GNAI2 in neutrophils) and activation of several downstream signaling pathways including PI3K and MAPK pathways. This Tursiops truncatus (Atlantic bottle-nosed dolphin) protein is Interleukin-8 (CXCL8).